The primary structure comprises 116 residues: Protein Wnt-5a (116 aa).

Serine 1 carries the O-palmitoleoyl serine; by PORCN lipid modification. N-linked (GlcNAc...) asparagine glycans are attached at residues asparagine 69 and asparagine 83. Cysteine 82 and cysteine 97 are oxidised to a cystine.

This sequence belongs to the Wnt family. Post-translationally, palmitoleoylation is required for efficient binding to frizzled receptors. Depalmitoleoylation leads to Wnt signaling pathway inhibition.

The protein localises to the secreted. The protein resides in the extracellular space. It is found in the extracellular matrix. Functionally, ligand for members of the frizzled family of seven transmembrane receptors. Can activate or inhibit canonical Wnt signaling, depending on receptor context. Required during embryogenesis for extension of the primary anterior-posterior axis. The sequence is that of Protein Wnt-5a (WNT-5A) from Alopias vulpinus (Common thresher shark).